The following is a 265-amino-acid chain: uncharacterized protein (265 aa).

Residues 1-20 form the signal peptide; it reads MSRAMALFFVLCWIQDEIVL. A helical transmembrane segment spans residues 192 to 212; that stretch reads IIAAVSGVAILMAIVLLLLGL.

Its subcellular location is the membrane. This is an uncharacterized protein from Homo sapiens (Human).